A 492-amino-acid chain; its full sequence is Malonyl-CoA decarboxylase, mitochondrial (492 aa).

The N-terminal 38 residues, 1–38, are a transit peptide targeting the mitochondrion; it reads MRGLGPSLRARRLLPLRYPPRPPGPRGPRLCSGLTASA. The alpha-helical domain stretch occupies residues 39–189; it reads MDELLRRAVP…VLKSMLSEWF (151 aa). An N6-acetyllysine modification is found at lysine 58. Lysine 167 is modified (N6-acetyllysine; alternate). Lysine 167 carries the N6-succinyllysine; alternate modification. A catalytic domain region spans residues 190–492; it reads SSGFLNLERV…VAQFQSNSKL (303 aa). Position 210 is an N6-acetyllysine (lysine 210). Lysine 221 is modified (N6-succinyllysine). 298-304 is a binding site for malonyl-CoA; it reads QGVELGT. Lysine 316 carries the post-translational modification N6-acetyllysine. Serine 328 serves as a coordination point for malonyl-CoA. The active-site Proton acceptor is serine 328. Lysine 385 bears the N6-acetyllysine; alternate mark. The residue at position 385 (lysine 385) is an N6-succinyllysine; alternate. Lysine 388 carries the N6-acetyllysine modification. Residue histidine 422 participates in malonyl-CoA binding. Histidine 422 serves as the catalytic Proton donor. Lysine 441 and lysine 471 each carry N6-acetyllysine. Residues 490 to 492 carry the Microbody targeting signal motif; sequence SKL.

Homotetramer. Dimer of dimers. The two subunits within a dimer display conformational differences suggesting that at any given moment, only one of the two subunits is competent for malonyl-CoA binding and catalytic activity. Under oxidizing conditions, can form disulfide-linked homotetramers (in vitro). Associates with the peroxisomal targeting signal receptor PEX5. In terms of processing, acetylation at Lys-471 activates malonyl-CoA decarboxylase activity. Deacetylation at Lys-471 by SIRT4 represses activity, leading to promote lipogenesis. Interchain disulfide bonds may form in peroxisomes (Potential). Interchain disulfide bonds are not expected to form in the reducing environment of the cytoplasm and mitochondria. Expressed in liver, heart, skeletal muscles and adipose tissues (at protein level). Ubiquitous. Strongly expressed in liver, kidney, heart, skeletal muscle and adipose tissues. Weakly expressed in brain.

It localises to the cytoplasm. Its subcellular location is the mitochondrion matrix. The protein localises to the peroxisome. The protein resides in the peroxisome matrix. The catalysed reaction is malonyl-CoA + H(+) = acetyl-CoA + CO2. It functions in the pathway metabolic intermediate biosynthesis; acetyl-CoA biosynthesis; acetyl-CoA from malonyl-CoA: step 1/1. Malonyl-CoA decarboxylase activity does not require any cofactors or divalent metal ions. Functionally, catalyzes the conversion of malonyl-CoA to acetyl-CoA. In the fatty acid biosynthesis MCD selectively removes malonyl-CoA and thus assures that methyl-malonyl-CoA is the only chain elongating substrate for fatty acid synthase and that fatty acids with multiple methyl side chains are produced. In peroxisomes it may be involved in degrading intraperoxisomal malonyl-CoA, which is generated by the peroxisomal beta-oxidation of odd chain-length dicarboxylic fatty acids. Plays a role in the metabolic balance between glucose and lipid oxidation in muscle independent of alterations in insulin signaling. May play a role in controlling the extent of ischemic injury by promoting glucose oxidation. This chain is Malonyl-CoA decarboxylase, mitochondrial, found in Rattus norvegicus (Rat).